Consider the following 281-residue polypeptide: Aliphatic sulfonates import ATP-binding protein SsuB (281 aa).

The region spanning 40–263 is the ABC transporter domain; sequence LTLRNLRKSF…RRGSADLAAL (224 aa). 72–79 provides a ligand contact to ATP; sequence GRSGCGKS.

The protein belongs to the ABC transporter superfamily. Aliphatic sulfonates importer (TC 3.A.1.17.2) family. In terms of assembly, the complex is composed of two ATP-binding proteins (SsuB), two transmembrane proteins (SsuC) and a solute-binding protein (SsuA).

It is found in the cell inner membrane. The enzyme catalyses ATP + H2O + aliphatic sulfonate-[sulfonate-binding protein]Side 1 = ADP + phosphate + aliphatic sulfonateSide 2 + [sulfonate-binding protein]Side 1.. Part of the ABC transporter complex SsuABC involved in aliphatic sulfonates import. Responsible for energy coupling to the transport system. In Rhodopseudomonas palustris (strain BisA53), this protein is Aliphatic sulfonates import ATP-binding protein SsuB.